The chain runs to 233 residues: MIVPPDSAGFPEAPAIFAGEDLLCVRGERAIFAGLSFRLAPGGALLLLGPNGSGKSSLLRLLALLLRPAAGRLTWGGQAVAADPEAHGGRCHYVGHLDAIKPVLALRENVAFWAKLAGAGETHVDRALKAFALAPLATIPGRMLSAGQKRRANLARLIAAPAPLWLLDEPTTALDRASIGVLEDLIARHRAAGGMVVVSTHQDITLPGATVLALDHFAPDPSRAAGLFLEDEG.

Positions 17–233 (FAGEDLLCVR…AAGLFLEDEG (217 aa)) constitute an ABC transporter domain. ATP is bound at residue 49–56 (GPNGSGKS).

Belongs to the ABC transporter superfamily. CcmA exporter (TC 3.A.1.107) family. The complex is composed of two ATP-binding proteins (CcmA) and two transmembrane proteins (CcmB).

The protein localises to the cell inner membrane. The catalysed reaction is heme b(in) + ATP + H2O = heme b(out) + ADP + phosphate + H(+). In terms of biological role, part of the ABC transporter complex CcmAB involved in the biogenesis of c-type cytochromes; once thought to export heme, this seems not to be the case, but its exact role is uncertain. Responsible for energy coupling to the transport system. This Rhodospirillum rubrum (strain ATCC 11170 / ATH 1.1.1 / DSM 467 / LMG 4362 / NCIMB 8255 / S1) protein is Cytochrome c biogenesis ATP-binding export protein CcmA.